A 434-amino-acid polypeptide reads, in one-letter code: Serine hydroxymethyltransferase (434 aa).

(6S)-5,6,7,8-tetrahydrofolate is bound by residues L133 and 137–139 (GHL). An N6-(pyridoxal phosphate)lysine modification is found at K242.

This sequence belongs to the SHMT family. Homodimer. Pyridoxal 5'-phosphate serves as cofactor.

It is found in the cytoplasm. The enzyme catalyses (6R)-5,10-methylene-5,6,7,8-tetrahydrofolate + glycine + H2O = (6S)-5,6,7,8-tetrahydrofolate + L-serine. The protein operates within one-carbon metabolism; tetrahydrofolate interconversion. It participates in amino-acid biosynthesis; glycine biosynthesis; glycine from L-serine: step 1/1. Its function is as follows. Catalyzes the reversible interconversion of serine and glycine with tetrahydrofolate (THF) serving as the one-carbon carrier. This reaction serves as the major source of one-carbon groups required for the biosynthesis of purines, thymidylate, methionine, and other important biomolecules. Also exhibits THF-independent aldolase activity toward beta-hydroxyamino acids, producing glycine and aldehydes, via a retro-aldol mechanism. In Caulobacter sp. (strain K31), this protein is Serine hydroxymethyltransferase.